The chain runs to 122 residues: Large ribosomal subunit protein uL14 (122 aa).

The protein belongs to the universal ribosomal protein uL14 family. As to quaternary structure, part of the 50S ribosomal subunit. Forms a cluster with proteins L3 and L19. In the 70S ribosome, L14 and L19 interact and together make contacts with the 16S rRNA in bridges B5 and B8.

Functionally, binds to 23S rRNA. Forms part of two intersubunit bridges in the 70S ribosome. This chain is Large ribosomal subunit protein uL14, found in Rickettsia bellii (strain OSU 85-389).